The chain runs to 96 residues: uncharacterized protein (96 aa).

The next 2 membrane-spanning stretches (helical) occupy residues 27 to 47 and 50 to 70; these read LAFR…ALLI and LSGV…SIVF.

It is found in the cell membrane. This is an uncharacterized protein from Haemophilus influenzae (strain ATCC 51907 / DSM 11121 / KW20 / Rd).